Consider the following 367-residue polypeptide: Isoflavone 4'-O-methyltransferase (367 aa).

S-adenosyl-L-methionine is bound by residues 209-212, aspartate 233, 233-234, 253-254, and lysine 267; these read VGGG, DQ, and DM. Catalysis depends on histidine 271, which acts as the Proton acceptor.

The protein belongs to the class I-like SAM-binding methyltransferase superfamily. Cation-independent O-methyltransferase family. COMT subfamily.

The enzyme catalyses a 4'-hydroxyisoflavone + S-adenosyl-L-methionine = a 4'-methoxyisoflavone + S-adenosyl-L-homocysteine + H(+). It catalyses the reaction (2R,3S)-2,4',7-trihydroxyisoflavanone + S-adenosyl-L-methionine = (2R,3S)-2,7-dihydroxy-4'-methoxyisoflavanone + S-adenosyl-L-homocysteine + H(+). Its function is as follows. 2-hydroxyisoflavanone 4'-O-methyltransferase involved in the biosynthesis of formononetin. Can use 2,7,4'-trihydroxyisoflavanone, (+)-6a-hydroxymaackiain or medicarpin as substrate, but not daidzein or (-)-6a-hydroxymaackiain. In Glycyrrhiza echinata (Licorice), this protein is Isoflavone 4'-O-methyltransferase (HI4'OMT).